Reading from the N-terminus, the 85-residue chain is Cytochrome b (85 aa).

3 helical membrane passes run 1-8 (LTGLFLAM), 32-53 (WLIR…YLHI), and 68-85 (WNVG…AFVG). Residues histidine 38 and histidine 52 each contribute to the heme b site.

This sequence belongs to the cytochrome b family. In terms of assembly, the cytochrome bc1 complex contains 3 respiratory subunits (MT-CYB, CYC1 and UQCRFS1), 2 core proteins (UQCRC1 and UQCRC2) and probably 6 low-molecular weight proteins. Heme b serves as cofactor.

The protein localises to the mitochondrion inner membrane. In terms of biological role, component of the ubiquinol-cytochrome c reductase complex (complex III or cytochrome b-c1 complex) that is part of the mitochondrial respiratory chain. The b-c1 complex mediates electron transfer from ubiquinol to cytochrome c. Contributes to the generation of a proton gradient across the mitochondrial membrane that is then used for ATP synthesis. This chain is Cytochrome b (mt-cyb), found in Pomoxis nigromaculatus (Black crappie).